A 638-amino-acid polypeptide reads, in one-letter code: Chaperone protein DnaK (638 aa).

Thr198 carries the phosphothreonine; by autocatalysis modification. A disordered region spans residues 599–638 (IYESQQAEGGAEGGPSGHHDDGIVDADYEEVKDDNTKKSA). The segment covering 621–630 (IVDADYEEVK) has biased composition (acidic residues).

Belongs to the heat shock protein 70 family.

Acts as a chaperone. This is Chaperone protein DnaK from Allorhizobium ampelinum (strain ATCC BAA-846 / DSM 112012 / S4) (Agrobacterium vitis (strain S4)).